Here is an 898-residue protein sequence, read N- to C-terminus: Fasciclin-2 (898 aa).

A signal peptide spans 1-22 (MRTVACAVLLACFMGCLAGAWA). Residues 23–764 (QSAGLEILPN…EDGSEGQMSS (742 aa)) lie on the Extracellular side of the membrane. Ig-like C2-type domains follow at residues 31-124 (PNSE…KQLS), 134-219 (PITW…RPIR), 226-316 (PQMS…VEVT), 321-423 (PRIG…GHLM), and 428-525 (PSFA…IMLR). N-linked (GlcNAc...) asparagine glycans are attached at residues asparagine 35, asparagine 51, asparagine 149, asparagine 192, asparagine 297, and asparagine 328. Cysteine 48 and cysteine 113 are disulfide-bonded. 2 disulfide bridges follow: cysteine 156-cysteine 203 and cysteine 248-cysteine 300. A disulfide bond links cysteine 343 and cysteine 407. N-linked (GlcNAc...) asparagine glycans are attached at residues asparagine 447, asparagine 457, and asparagine 580. Residues cysteine 450 and cysteine 509 are joined by a disulfide bond. Fibronectin type-III domains are found at residues 532-626 (AVLQ…TPRI) and 644-745 (GTEN…VKDP). Residues 765 to 782 (AAIVVLVVAALLLALLVV) form a helical membrane-spanning segment. Topologically, residues 783–898 (DLVCCLVWRG…TSFVGKDSAV (116 aa)) are cytoplasmic.

The protein resides in the membrane. Its function is as follows. Neuronal recognition molecule. Involved in a pathway recognition for axons during the development of nerve fascicles. The polypeptide is Fasciclin-2 (FAS2) (Schistocerca americana (American grasshopper)).